Consider the following 419-residue polypeptide: rRNA methyltransferase 3, mitochondrial (419 aa).

The transit peptide at 1–39 directs the protein to the mitochondrion; the sequence is MAALCGGMLRGCILKPLGLSGSLQLKRNVRALRRTPVRV. Positions 42-68 are disordered; it reads ADEEGRERKQVEASRQRQPRQNESQAC. Residues 44–56 show a composition bias toward basic and acidic residues; it reads EEGRERKQVEASR. The S-adenosyl-L-methionine site is built by glycine 357, isoleucine 381, and leucine 390.

Belongs to the class IV-like SAM-binding methyltransferase superfamily. RNA methyltransferase TrmH family.

It is found in the mitochondrion. It catalyses the reaction a uridine in rRNA + S-adenosyl-L-methionine = a 2'-O-methyluridine in rRNA + S-adenosyl-L-homocysteine + H(+). Its function is as follows. S-adenosyl-L-methionine-dependent 2'-O-ribose methyltransferase that catalyzes the formation of 2'-O-methylguanosine at position 1370 (Gm1370) in the mitochondrial large subunit ribosomal RNA (mtLSU rRNA), a conserved modification in the peptidyl transferase domain of the mtLSU rRNA. Also required for formation of 2'-O-methyluridine at position 1369 (Um1369) mediated by MRM2. The sequence is that of rRNA methyltransferase 3, mitochondrial from Xenopus laevis (African clawed frog).